Here is a 409-residue protein sequence, read N- to C-terminus: tRNA-specific 2-thiouridylase MnmA (409 aa).

Residues 20 to 27 (AMSGGVDS) and Leu46 each bind ATP. Cys114 serves as the catalytic Nucleophile. Residues Cys114 and Cys210 are joined by a disulfide bond. An ATP-binding site is contributed by Gly138. The tract at residues 160 to 162 (RDQ) is interaction with tRNA. Cys210 serves as the catalytic Cysteine persulfide intermediate.

The protein belongs to the MnmA/TRMU family.

The protein resides in the cytoplasm. It carries out the reaction S-sulfanyl-L-cysteinyl-[protein] + uridine(34) in tRNA + AH2 + ATP = 2-thiouridine(34) in tRNA + L-cysteinyl-[protein] + A + AMP + diphosphate + H(+). Catalyzes the 2-thiolation of uridine at the wobble position (U34) of tRNA, leading to the formation of s(2)U34. This is tRNA-specific 2-thiouridylase MnmA from Bartonella henselae (strain ATCC 49882 / DSM 28221 / CCUG 30454 / Houston 1) (Rochalimaea henselae).